We begin with the raw amino-acid sequence, 289 residues long: Phosphatidylglycerol--prolipoprotein diacylglyceryl transferase (289 aa).

Transmembrane regions (helical) follow at residues 23–43 (ALHWYGLMYLVGFVFAMWLAV), 61–81 (LLYMGFLGVFVGGRLGYVLFY), 99–119 (GGMSFHGGLMGVICVMLWFAH), 125–145 (FFQVADFIAPLIPFGLGAGRL), 199–219 (SQLYQMMLEGVALFIILNLFI), 226–246 (GSVSGLFLICYGMFRIITEFF), and 259–279 (LFSMGQILSLPMVLAGILMMV). Arg-144 lines the a 1,2-diacyl-sn-glycero-3-phospho-(1'-sn-glycerol) pocket.

This sequence belongs to the Lgt family.

Its subcellular location is the cell inner membrane. The enzyme catalyses L-cysteinyl-[prolipoprotein] + a 1,2-diacyl-sn-glycero-3-phospho-(1'-sn-glycerol) = an S-1,2-diacyl-sn-glyceryl-L-cysteinyl-[prolipoprotein] + sn-glycerol 1-phosphate + H(+). Its pathway is protein modification; lipoprotein biosynthesis (diacylglyceryl transfer). In terms of biological role, catalyzes the transfer of the diacylglyceryl group from phosphatidylglycerol to the sulfhydryl group of the N-terminal cysteine of a prolipoprotein, the first step in the formation of mature lipoproteins. This chain is Phosphatidylglycerol--prolipoprotein diacylglyceryl transferase, found in Pectobacterium atrosepticum (strain SCRI 1043 / ATCC BAA-672) (Erwinia carotovora subsp. atroseptica).